Here is a 420-residue protein sequence, read N- to C-terminus: Na(+)/H(+) antiporter NhaA (420 aa).

The next 10 helical transmembrane spans lie at 34–54 (TTGG…ANLG), 69–89 (LTIE…IAGL), 107–127 (LVPI…YTLF), 141–161 (IPMA…GAGL), 168–190 (FLLT…FFST), 194–213 (IWWL…MQHF), 271–291 (WSAG…HVSG), 301–321 (PISL…ITLG), 342–362 (IIAV…MTDL), and 374–394 (AKAS…AMLH).

Belongs to the NhaA Na(+)/H(+) (TC 2.A.33) antiporter family.

It is found in the cell membrane. It carries out the reaction Na(+)(in) + 2 H(+)(out) = Na(+)(out) + 2 H(+)(in). In terms of biological role, na(+)/H(+) antiporter that extrudes sodium in exchange for external protons. In Cutibacterium acnes (strain DSM 16379 / KPA171202) (Propionibacterium acnes), this protein is Na(+)/H(+) antiporter NhaA.